The sequence spans 374 residues: 4-galactosyl-N-acetylglucosaminide 3-alpha-L-fucosyltransferase FUT5 (374 aa).

Residues 1–15 (MDLLGAAKPQWPWRR) lie on the Cytoplasmic side of the membrane. Residues 16 to 34 (CLAGLLFQLLVAVCFFSYL) form a helical; Signal-anchor for type II membrane protein membrane-spanning segment. Over 35-374 (RVSRDDATGS…TVRSIAAWFN (340 aa)) the chain is Lumenal. Asn-60, Asn-105, Asn-167, and Asn-198 each carry an N-linked (GlcNAc...) asparagine glycan.

Belongs to the glycosyltransferase 10 family.

The protein localises to the golgi apparatus. Its subcellular location is the golgi stack membrane. It catalyses the reaction a beta-D-galactosyl-(1-&gt;3)-N-acetyl-beta-D-glucosaminyl derivative + GDP-beta-L-fucose = a beta-D-galactosyl-(1-&gt;3)-[alpha-L-fucosyl-(1-&gt;4)]-N-acetyl-beta-D-glucosaminyl derivative + GDP + H(+). The catalysed reaction is an N-acetyl-alpha-neuraminyl-(2-&gt;3)-beta-D-galactosyl-(1-&gt;4)-N-acetyl-beta-D-glucosaminyl derivative + GDP-beta-L-fucose = an alpha-Neu5Ac-(2-&gt;3)-beta-D-Gal-(1-&gt;4)-[alpha-L-Fuc-(1-&gt;3)]-beta-D-GlcNAc derivative + GDP + H(+). The enzyme catalyses an alpha-Neu5Ac-(2-&gt;3)-beta-D-Gal-(1-&gt;4)-beta-D-GlcNAc-(1-&gt;3)-beta-D-Gal-(1-&gt;4)-[alpha-L-Fuc-(1-&gt;3)]-beta-D-GlcNAc derivative + GDP-beta-L-fucose = an alpha-Neu5Ac-(2-&gt;3)-beta-D-Gal-(1-&gt;4)-[alpha-L-Fuc-(1-&gt;3)]-beta-D-GlcNAc-(1-&gt;3)-beta-D-Gal-(1-&gt;4)-[alpha-L-Fuc-(1-&gt;3)]-beta-D-GlcNAc derivative + GDP + H(+). It carries out the reaction a beta-D-galactosyl-(1-&gt;4)-N-acetyl-beta-D-glucosaminyl derivative + GDP-beta-L-fucose = a beta-D-galactosyl-(1-&gt;4)-[alpha-L-fucosyl-(1-&gt;3)]-N-acetyl-beta-D-glucosaminyl derivative + GDP + H(+). It catalyses the reaction a neolactoside nLc4Cer + GDP-beta-L-fucose = a neolactoside III(3)-alpha-Fuc-nLc4Cer + GDP + H(+). The catalysed reaction is a neolactoside nLc6Cer + GDP-beta-L-fucose = beta-D-galactosyl-(1-&gt;4)-N-acetyl-beta-D-glucosaminyl-(1-&gt;3)-beta-D-galactosyl-(1-&gt;4)-[alpha-L-fucosyl-(1-&gt;3)]-N-acetyl-beta-D-glucosaminyl-(1-&gt;3)-beta-D-galactosyl-(1-&gt;4)-beta-D-glucosyl-(1&lt;-&gt;1')-ceramide + GDP + H(+). The enzyme catalyses a neolactoside nLc6Cer(d18:1(4E)) + GDP-beta-L-fucose = a neolactoside III(3)-alpha-Fuc-nLc6Cer(d18:1(4E)) + GDP + H(+). It carries out the reaction a neolactoside nLc4Cer(d18:1(4E)) + GDP-beta-L-fucose = a neolactoside III(3)-alpha-Fuc-nLc4Cer(d18:1(4E)) + GDP + H(+). It catalyses the reaction a neolactoside VI(3)-alpha-NeuNAc-nLc6Cer + GDP-beta-L-fucose = a neolactoside VI(3)-alpha-NeuAc,III(3)-alphaFuc-nLc6Cer + GDP + H(+). The catalysed reaction is beta-D-galactosyl-(1-&gt;4)-N-acetyl-D-glucosamine + GDP-beta-L-fucose = beta-D-galactosyl-(1-&gt;4)-[alpha-L-fucosyl-(1-&gt;3)]-N-acetyl-D-glucosamine + GDP + H(+). The enzyme catalyses N-acetyl-alpha-neuraminosyl-(2-&gt;3)-beta-D-galactosyl-(1-&gt;4)-N-acetyl-beta-D-glucosamine + GDP-beta-L-fucose = N-acetyl-alpha-neuraminosyl-(2-&gt;3)-beta-D-galactosyl-(1-&gt;4)-[alpha-L-fucosyl-(1-&gt;3)]-N-acetyl-beta-D-glucosamine + GDP + H(+). It carries out the reaction alpha-L-Fuc-(1-&gt;2)-beta-D-Gal-(1-&gt;4)-D-GlcNAc + GDP-beta-L-fucose = alpha-L-Fuc-(1-&gt;2)-beta-D-Gal-(1-&gt;4)-[alpha-L-Fuc-(1-&gt;3)]-D-GlcNAc + GDP + H(+). It catalyses the reaction an alpha-Neu5Ac-(2-&gt;3)-beta-D-Gal-(1-&gt;3)-D-GlcNAc derivative + GDP-beta-L-fucose = an alpha-Neu5Ac-(2-&gt;3)-beta-D-Gal-(1-&gt;3)-[alpha-L-Fuc-(1-&gt;4)]-beta-D-GlcNAc derivative + GDP + H(+). It participates in protein modification; protein glycosylation. Catalyzes preferentially the transfer of L-fucose, from a guanosine diphosphate-beta-L-fucose, to the N-acetyl-beta-D-glucosamine (GlcNAc) of an N-acetyllactosamine unit (type 2 chain) of an oligosaccharide, or a glycoprotein- and a glycolipid-linked N-acetyllactosamine unit via an alpha (1,3) linkage and participates in the surface expression of VIM-2, Lewis X/SSEA-1 and sialyl Lewis X antigens. Preferentially transfers fucose to the GlcNAc of an internal N-acetyllactosamine unit of a poly-N-acetyllactosamine chain acceptor substrate. Also catalyzes to a lesser extend the transfer of L-fucose to the GlcNAc of a type 1 (beta-D-galactosyl-(1-&gt;3)-N-acetyl-beta-D-glucosaminyl) or H-type 1 (alpha-L-Fuc-(1-&gt;2)-beta-D-Gal-(1-&gt;3)-D-GlcNAc) chain oligosaccharide via an alpha (1,4) linkage. Preferentially catalyzes sialylated type 2 oligosaccharide acceptors over neutral type 2 or H type 2 (alpha-L-Fuc-(1-&gt;2)-beta-D-Gal-(1-&gt;4)-D-GlcNAc) oligosaccharide acceptors. Lactose-based structures are also acceptor substrates. In Hylobates lar (Lar gibbon), this protein is 4-galactosyl-N-acetylglucosaminide 3-alpha-L-fucosyltransferase FUT5.